The following is a 385-amino-acid chain: 1-deoxy-D-xylulose 5-phosphate reductoisomerase (385 aa).

T10, G11, S12, I13, and N124 together coordinate NADPH. K125 serves as a coordination point for 1-deoxy-D-xylulose 5-phosphate. E126 is a binding site for NADPH. Position 150 (D150) interacts with Mn(2+). 1-deoxy-D-xylulose 5-phosphate contacts are provided by S151, E152, S176, and H199. Residue E152 participates in Mn(2+) binding. G205 is a binding site for NADPH. Residues S212, N217, K218, and E221 each coordinate 1-deoxy-D-xylulose 5-phosphate. Position 221 (E221) interacts with Mn(2+).

This sequence belongs to the DXR family. Requires Mg(2+) as cofactor. The cofactor is Mn(2+).

It carries out the reaction 2-C-methyl-D-erythritol 4-phosphate + NADP(+) = 1-deoxy-D-xylulose 5-phosphate + NADPH + H(+). Its pathway is isoprenoid biosynthesis; isopentenyl diphosphate biosynthesis via DXP pathway; isopentenyl diphosphate from 1-deoxy-D-xylulose 5-phosphate: step 1/6. Its function is as follows. Catalyzes the NADPH-dependent rearrangement and reduction of 1-deoxy-D-xylulose-5-phosphate (DXP) to 2-C-methyl-D-erythritol 4-phosphate (MEP). This is 1-deoxy-D-xylulose 5-phosphate reductoisomerase from Clostridium botulinum (strain Alaska E43 / Type E3).